The chain runs to 127 residues: Fatty acid-binding protein, liver (127 aa).

The residue at position 1 (Met1) is an N-acetylmethionine. Ser11 carries the phosphoserine modification. Lys31 and Lys36 each carry N6-succinyllysine. Residue Ser39 is modified to Phosphoserine. Residue Lys46 is modified to N6-succinyllysine. Residue Thr51 is modified to Phosphothreonine. 2 positions are modified to N6-succinyllysine: Lys57 and Lys78. Lys84 carries the N6-acetyllysine; alternate modification. Lys84 carries the post-translational modification N6-succinyllysine; alternate. Residue Lys90 is modified to N6-succinyllysine. Ser100 is subject to Phosphoserine. Lys121 carries the post-translational modification N6-succinyllysine.

This sequence belongs to the calycin superfamily. Fatty-acid binding protein (FABP) family.

It localises to the cytoplasm. Its function is as follows. Plays a role in lipoprotein-mediated cholesterol uptake in hepatocytes. Binds cholesterol. Binds free fatty acids and their coenzyme A derivatives, bilirubin, and some other small molecules in the cytoplasm. May be involved in intracellular lipid transport. In Mus musculus (Mouse), this protein is Fatty acid-binding protein, liver (Fabp1).